The sequence spans 270 residues: A-type potassium channel modulatory protein KCNIP2 (270 aa).

A compositionally biased stretch (basic and acidic residues) spans 1–17 (MRGQGRKESLSESRDLD). The interval 1 to 34 (MRGQGRKESLSESRDLDGSYDQLTGHPPGPSKKA) is disordered. The residue at position 9 (serine 9) is a Phosphoserine. 2 S-palmitoyl cysteine lipidation sites follow: cysteine 45 and cysteine 46. The EF-hand 1; degenerate domain maps to 81–137 (FELSTVCHRPEGLEQLQEQTKFTRRELQVLYRGFKNECPSGIVNEENFKQIYSQFFP). EF-hand domains lie at 140-175 (DSSN…ILRG), 176-211 (TIDD…IYDM), and 224-259 (APRE…DENI). Ca(2+) contacts are provided by aspartate 153, asparagine 155, aspartate 157, serine 159, aspartate 164, aspartate 189, asparagine 191, aspartate 193, cysteine 195, glutamate 200, aspartate 237, asparagine 239, aspartate 241, and glutamate 248. Residues 257–270 (ENIMRSMQLFDNVI) are interaction with KCND2.

It belongs to the recoverin family. In terms of assembly, component of heteromultimeric potassium channels. Identified in potassium channel complexes containing KCND1, KCND2, KCND3, KCNIP1, KCNIP2, KCNIP3, KCNIP4, DPP6 and DPP10. The KCND2-KCNIP2 channel complex contains four KCND2 and four KCNIP2 subunits. Interacts with KCND2. Probably part of a complex consisting of KCNIP1, KCNIP2 isoform 3 and KCND2. At least isoform 2 and isoform 3 can self-associate to form homodimers and homotetramers. Isoform 3 interacts with KCNIP1 in a calcium-dependent manner. Interacts with KCND3; each KCNIP2 monomer interacts with two adjacent KCND3 subunits, through both the N-terminal inactivation ball of a KCND3 subunit and a C-terminal helix from the adjacent KCND3 subunit, clamping them together; this interaction modulates the channel gating kinetics. Palmitoylated. Palmitoylation enhances association with the plasma membrane. As to expression, expressed in heart, brain and lung. In brain, abundantly expressed in striatum, hippocampus and olfactory bulb, moderately expressed in cerebral cortex and lowly expressed in thalamus and hypothalamus. Isoform 1 is predominant in cerebral cortex, striatum and hippocampus. Isoform 1, isoform 2 and isoform 3 are equally expressed in olfactory bulb. Iisoform 3 is expressed at high levels and isoform 1 at low levels in heart (in PubMed:11263977).

The protein resides in the cell membrane. Its function is as follows. Regulatory subunit of Kv4/D (Shal)-type voltage-gated rapidly inactivating A-type potassium channels. Modulates channel density, inactivation kinetics and rate of recovery from inactivation in a calcium-dependent and isoform-specific manner. Involved in KCND2 and KCND3 trafficking to the cell surface. Essential for the expression of I(To) currents in the heart. Required for normal protein levels of KCND2 in the heart ventricle. The chain is A-type potassium channel modulatory protein KCNIP2 from Rattus norvegicus (Rat).